The primary structure comprises 400 residues: Peroxisome biogenesis factor 16 (400 aa).

Residues 176–226 (QKQFQNKRPAVTMSINNNNNINNNDNNNINNNNNTNDDNFNNNNNNNNNRR) form a disordered region. Residues 190–224 (INNNNNINNNDNNNINNNNNTNDDNFNNNNNNNNN) are compositionally biased toward low complexity.

It belongs to the peroxin-16 family.

Its subcellular location is the cytoplasm. Its function is as follows. Required for peroxisome membrane biogenesis. The chain is Peroxisome biogenesis factor 16 (pex16) from Dictyostelium discoideum (Social amoeba).